The primary structure comprises 530 residues: Glucose-6-phosphate isomerase (530 aa).

Residue Glu-347 is the Proton donor of the active site. Residues His-378 and Lys-493 contribute to the active site.

This sequence belongs to the GPI family.

It is found in the cytoplasm. The enzyme catalyses alpha-D-glucose 6-phosphate = beta-D-fructose 6-phosphate. It participates in carbohydrate biosynthesis; gluconeogenesis. Its pathway is carbohydrate degradation; glycolysis; D-glyceraldehyde 3-phosphate and glycerone phosphate from D-glucose: step 2/4. Catalyzes the reversible isomerization of glucose-6-phosphate to fructose-6-phosphate. The chain is Glucose-6-phosphate isomerase from Chlamydia abortus (strain DSM 27085 / S26/3) (Chlamydophila abortus).